A 252-amino-acid polypeptide reads, in one-letter code: Probable oligoribonuclease (252 aa).

Positions 81 to 241 (VWIDCEMTGL…ALSDILESIG (161 aa)) constitute an Exonuclease domain. Residue Tyr202 is part of the active site.

Belongs to the oligoribonuclease family.

The protein localises to the cytoplasm. Its subcellular location is the nucleus. Functionally, 3'-to-5' exoribonuclease specific for small oligoribonucleotides. The chain is Probable oligoribonuclease (rex2) from Schizosaccharomyces pombe (strain 972 / ATCC 24843) (Fission yeast).